The sequence spans 153 residues: UPF0756 membrane protein Bcer98_3279 (153 aa).

Transmembrane regions (helical) follow at residues 8 to 28 (FLFI…IVAI), 54 to 74 (LGVT…EIGF), 87 to 107 (WIAL…LQLL), and 117 to 137 (LVFG…GPLI).

Belongs to the UPF0756 family.

The protein resides in the cell membrane. The chain is UPF0756 membrane protein Bcer98_3279 from Bacillus cytotoxicus (strain DSM 22905 / CIP 110041 / 391-98 / NVH 391-98).